Reading from the N-terminus, the 436-residue chain is MNTERTMAGGPAPMRDGRRDTEIRNYVMNLGPQHPAAHGVLRLVLEMDGETVVRADPHVGLLHRGTEKLAESKPFNQSIGYMDRLDYVSMMCNEHAYVRAIETLLGIEAPIRAQYIRTMFDEITRILNHLMNIGTGALDLGAMAVMLYAFREREELMDCYEAVSGARMHATYYRPGGVYRELPEQMPKYKESRWKTGKQLRRLNAAREGSLLDFIENFTREFPNRIDEYETLLTDNRIWKQRTVGIGVVSPQQAMEWGMTGVMLRGSGVAWDLRKKRPYAKYDAVDFDIPVGTAGDCYDRYLCRVAEMRQSNRIIRQCVDWLRANPGPVMLHNFKVAPPSRQEMKSDMEALIHHFKLFSEGYQVPAGETYAAVEAPKGEFGCYLISDGANKPFRVHLRAPGFAHLSSLDEIVRGHMLADVVAMIGTYDIVFGEVDR.

This sequence belongs to the complex I 49 kDa subunit family. As to quaternary structure, NDH-1 is composed of 14 different subunits. Subunits NuoB, C, D, E, F, and G constitute the peripheral sector of the complex.

Its subcellular location is the cell inner membrane. The catalysed reaction is a quinone + NADH + 5 H(+)(in) = a quinol + NAD(+) + 4 H(+)(out). Functionally, NDH-1 shuttles electrons from NADH, via FMN and iron-sulfur (Fe-S) centers, to quinones in the respiratory chain. The immediate electron acceptor for the enzyme in this species is believed to be ubiquinone. Couples the redox reaction to proton translocation (for every two electrons transferred, four hydrogen ions are translocated across the cytoplasmic membrane), and thus conserves the redox energy in a proton gradient. The chain is NADH-quinone oxidoreductase subunit D 1 from Stenotrophomonas maltophilia (strain R551-3).